A 252-amino-acid polypeptide reads, in one-letter code: Geranylgeranylglyceryl phosphate synthase (252 aa).

Asp27 and Ser56 together coordinate Mg(2+). Sn-glycerol 1-phosphate-binding positions include 175-181, 206-207, and 228-229; these read YLEAGSG, GG, and GT.

This sequence belongs to the GGGP/HepGP synthase family. Group II subfamily. It depends on Mg(2+) as a cofactor.

The protein localises to the cytoplasm. The catalysed reaction is sn-glycerol 1-phosphate + (2E,6E,10E)-geranylgeranyl diphosphate = sn-3-O-(geranylgeranyl)glycerol 1-phosphate + diphosphate. The protein operates within membrane lipid metabolism; glycerophospholipid metabolism. Prenyltransferase that catalyzes the transfer of the geranylgeranyl moiety of geranylgeranyl diphosphate (GGPP) to the C3 hydroxyl of sn-glycerol-1-phosphate (G1P). This reaction is the first ether-bond-formation step in the biosynthesis of archaeal membrane lipids. This chain is Geranylgeranylglyceryl phosphate synthase, found in Pyrococcus abyssi (strain GE5 / Orsay).